Here is a 345-residue protein sequence, read N- to C-terminus: NADPH dehydrogenase (345 aa).

23-26 contacts FMN; it reads SPMC. Y28 lines the substrate pocket. Residues A60 and Q102 each coordinate FMN. 164–167 contributes to the substrate binding site; sequence HGAH. FMN contacts are provided by residues R215 and 307–308; that span reads GR.

The protein belongs to the NADH:flavin oxidoreductase/NADH oxidase family. NamA subfamily. As to quaternary structure, homotetramer. It depends on FMN as a cofactor.

It catalyses the reaction A + NADPH + H(+) = AH2 + NADP(+). In terms of biological role, catalyzes the reduction of the double bond of an array of alpha,beta-unsaturated aldehydes and ketones. It also reduces the nitro group of nitroester and nitroaromatic compounds. It could have a role in detoxification processes. The chain is NADPH dehydrogenase from Bacillus cereus (strain AH820).